Consider the following 612-residue polypeptide: MNHFPKLLSSQIGFDVAQTMLEGFDRHYRIFRDAAIHAKTLFEQADWHGLQKLARDRITSYDERVEECVELLEDEYDAENIDDEVWQQIKLHYIGLLTTHRQPECAETFFNSVCCKILHRSYFSNDFIFVRPAISTEYIENDEPAAKPTYRAYYPGKDGLAATLERIVTNFQLEPPFEDLTRDVGCVMQAIQDAFGVFDEAPNFQIHVLSSLFYRNKSAYIIGRIINGDLLMPFAVPLRHVKPGVLALDTVLLKRDQLLIIFSFSHSYFLVDMEVPSAYVEFLGTIMQGKPKAEIYTSVGLQKQGKNLFYRDLLHHLSHSSDQFIIAPGIKGLVMLVFTLPSFPYVFKLIKDSFPPPKETTRAQIKEKYQLVKRHDRLGRMADTLEYSSVALPVSRLDEALVRELEKEVPSLIEYDGDSLVIRHMYIERRMVPLNLFLQNGNDEDIEHGIKEYGNAIKELMQANIFPGDMLYKNFGVTRHGRVVFYDYDEIEYLTDCNVRAVPAPRNEEDEMSGEPWYSVGPHDIFPETYGTFLLGDPRVRRSFMQHHADFFDPALWQRHKDHLLKGELADFFPYDGSVRFCMRYPERFADAAGAASNEQDAPDAGRSVRAA.

ATP is bound by residues 327-333 and lysine 348; that span reads APGIKGL. Residue aspartate 383 is part of the active site. Residues 593–612 are disordered; it reads AGAASNEQDAPDAGRSVRAA.

This sequence belongs to the AceK family.

The protein localises to the cytoplasm. The catalysed reaction is L-seryl-[isocitrate dehydrogenase] + ATP = O-phospho-L-seryl-[isocitrate dehydrogenase] + ADP + H(+). Bifunctional enzyme which can phosphorylate or dephosphorylate isocitrate dehydrogenase (IDH) on a specific serine residue. This is a regulatory mechanism which enables bacteria to bypass the Krebs cycle via the glyoxylate shunt in response to the source of carbon. When bacteria are grown on glucose, IDH is fully active and unphosphorylated, but when grown on acetate or ethanol, the activity of IDH declines drastically concomitant with its phosphorylation. The sequence is that of Isocitrate dehydrogenase kinase/phosphatase from Paraburkholderia xenovorans (strain LB400).